A 282-amino-acid polypeptide reads, in one-letter code: Gap junction Cx32.7 protein (282 aa).

The Cytoplasmic segment spans residues Gly-2–Lys-13. The chain crosses the membrane as a helical span at residues Val-14 to Val-36. Over Leu-37 to Arg-76 the chain is Extracellular. The chain crosses the membrane as a helical span at residues Phe-77–Val-99. Residues Ile-100 to Arg-148 are Cytoplasmic-facing. A helical transmembrane segment spans residues Ser-149 to Leu-171. Residues Tyr-172–Val-203 are Extracellular-facing. The helical transmembrane segment at Ile-204 to Leu-226 threads the bilayer. Over Cys-227–Ile-282 the chain is Cytoplasmic.

The protein belongs to the connexin family. Alpha-type (group II) subfamily. In terms of assembly, a connexon is composed of a hexamer of connexins. As to expression, expressed equally in incompetent and competent ovaries.

The protein localises to the cell membrane. Its subcellular location is the cell junction. The protein resides in the gap junction. In terms of biological role, one gap junction consists of a cluster of closely packed pairs of transmembrane channels, the connexons, through which materials of low MW diffuse from one cell to a neighboring cell. The sequence is that of Gap junction Cx32.7 protein from Micropogonias undulatus (Atlantic croaker).